Consider the following 455-residue polypeptide: Peroxisomal membrane protein PEX3 (455 aa).

Positions T113–G125 are enriched in polar residues. Positions T113–P135 are disordered. A helical transmembrane segment spans residues F155–L171.

The protein belongs to the peroxin-3 family. Component of the peroxisomal docking complex, composed of at least PEX3, PEX13, PEX14 and PEX17. Component of the peroxisomal translocation complex, composed of at least PEX3, PEX2, PEX10 and PEX12. Interacts with PEX19. Interacts with the pexophagy receptor ATG30.

The protein localises to the peroxisome membrane. Its function is as follows. Peroxisomal membrane protein required for peroxisome biosynthesis. Shared component of both the peroxisomal docking complex and the peroxisomal translocation complex. The two types of peroxisomal matrix targeting signals, PTS1 and PTS2, are first recognized in the cytosol by their receptors PEX5 and PEX7, respectively, which then carry the cargo to the peroxisomal membrane. The peroxisomal targeting signal (PTS) receptor-cargo complexes interact with peroxisomal membrane protein (PMP) components of the docking complex. They have then additional downstream interactions with the translocation complex, leading to the transport of fully folded and oligomerized cargo into the peroxisome matrix. PEX3 acts as an anchoring site for PEX19 on the peroxisomal membrane and thus plays a crucial role in the assembly of the peroxisomal translocation complex. Is also essential for the interaction between the two complexes. Finally. PEX3 activates selective autophagy of peroxisomes (pexophagy) via interaction with the pexophagy receptor ATG30. This chain is Peroxisomal membrane protein PEX3, found in Komagataella phaffii (strain GS115 / ATCC 20864) (Yeast).